A 437-amino-acid chain; its full sequence is Coiled-coil domain-containing protein 78 (437 aa).

Coiled coils occupy residues 83–114 (HLRE…LHGN), 147–287 (EELK…QRQE), and 360–408 (QRLQ…YKQE).

This sequence belongs to the CCDC78 family.

It is found in the cytoplasm. Its subcellular location is the cytoskeleton. The protein resides in the microtubule organizing center. It localises to the centrosome. The protein localises to the centriole. It is found in the perinuclear region. Its subcellular location is the cell membrane. The protein resides in the sarcolemma. It localises to the sarcoplasmic reticulum. Its function is as follows. Component of the deuterosome, a structure that promotes de novo centriole amplification in multiciliated cells that can generate more than 100 centrioles. Deuterosome-mediated centriole amplification occurs in terminally differentiated multiciliated cells (G1/0) and not in S phase. Essential for centriole amplification and is required for CEP152 localization to the deuterosome. The polypeptide is Coiled-coil domain-containing protein 78 (Ccdc78) (Mus musculus (Mouse)).